The following is a 429-amino-acid chain: MKKQRNLRSMAAQAVEQVVEQGQSLSNILPPLQQKVSDKDKALLQELCFGVLRTLSQLDWLINKLMARPMTGKQRTVHYLIMVGLYQLLYTRIPPHAALAETVEGAVAIKRPQLKGLINGVLRQFQRQQEELLAEFNASDARYLHPSWLLKRLQKAYPEQWQSIIEANNQRPPMWLRVNRTHHSRDSWLALLDEAGMKGFPHADYPDAVRLETPAPVHVLPGFEEGWVTVQDASAQGCMAWLAPQNGEHILDLCAAPGGKTTHILEVAPEAQVVAVDIDEQRLSRVYDNLKRLGMKATVKQGDGRYPSQWCGEQQFDRILLDAPCSATGVIRRHPDIKWLRRDRDIPELAQLQSEILDAIWPHLKSGGILIYATCSVLPEENSLQIKAFLQRTADAELCETGTPEQPGKQNLPGAEEGDGFFYAKLIKK.

Residues 254–260 (CAAPGGK), D277, D303, and D322 contribute to the S-adenosyl-L-methionine site. The Nucleophile role is filled by C375.

The protein belongs to the class I-like SAM-binding methyltransferase superfamily. RsmB/NOP family.

Its subcellular location is the cytoplasm. It catalyses the reaction cytidine(967) in 16S rRNA + S-adenosyl-L-methionine = 5-methylcytidine(967) in 16S rRNA + S-adenosyl-L-homocysteine + H(+). In terms of biological role, specifically methylates the cytosine at position 967 (m5C967) of 16S rRNA. This chain is Ribosomal RNA small subunit methyltransferase B, found in Escherichia fergusonii (strain ATCC 35469 / DSM 13698 / CCUG 18766 / IAM 14443 / JCM 21226 / LMG 7866 / NBRC 102419 / NCTC 12128 / CDC 0568-73).